A 440-amino-acid chain; its full sequence is Streptokinase A (440 aa).

Positions 1–26 (MKNYLSIGVIALLFALTFGTVKSVQA) are cleaved as a signal peptide.

In terms of biological role, this protein is not a protease, but it activates plasminogen by complexing with it. As a potential virulence factor, it is thought to prevent the formation of effective fibrin barriers around the site of infection, thereby contributing to the invasiveness of the cells. This chain is Streptokinase A (ska), found in Streptococcus pyogenes serotype M1.